The chain runs to 193 residues: Putative manganese efflux pump MntP (193 aa).

Helical transmembrane passes span 3–23, 41–61, 65–85, 106–126, 133–153, and 169–189; these read MYAT…ASIC, LIFG…GLYA, IIEW…CRMI, IVLI…GIGL, IVHT…LGML, and IGGL…LELF.

The protein belongs to the MntP (TC 9.B.29) family.

It is found in the cell inner membrane. Probably functions as a manganese efflux pump. The chain is Putative manganese efflux pump MntP from Photorhabdus laumondii subsp. laumondii (strain DSM 15139 / CIP 105565 / TT01) (Photorhabdus luminescens subsp. laumondii).